The sequence spans 113 residues: T cell receptor alpha variable 8-3 (113 aa).

The first 20 residues, 1–20 (MLLELIPLLGIHFVLRTARA), serve as a signal peptide directing secretion. In terms of domain architecture, Ig-like spans 21-113 (QSVTQPDIHI…DAAEYFCAVG (93 aa)). An intrachain disulfide couples Cys-42 to Cys-110. Residue Asn-43 is glycosylated (N-linked (GlcNAc...) asparagine).

Alpha-beta TR is a heterodimer composed of an alpha and beta chain; disulfide-linked. The alpha-beta TR is associated with the transmembrane signaling CD3 coreceptor proteins to form the TR-CD3 (TcR or TCR). The assembly of alpha-beta TR heterodimers with CD3 occurs in the endoplasmic reticulum where a single alpha-beta TR heterodimer associates with one CD3D-CD3E heterodimer, one CD3G-CD3E heterodimer and one CD247 homodimer forming a stable octameric structure. CD3D-CD3E and CD3G-CD3E heterodimers preferentially associate with TR alpha and TR beta chains, respectively. The association of the CD247 homodimer is the last step of TcR assembly in the endoplasmic reticulum and is required for transport to the cell surface.

The protein localises to the cell membrane. In terms of biological role, v region of the variable domain of T cell receptor (TR) alpha chain that participates in the antigen recognition. Alpha-beta T cell receptors are antigen specific receptors which are essential to the immune response and are present on the cell surface of T lymphocytes. Recognize peptide-major histocompatibility (MH) (pMH) complexes that are displayed by antigen presenting cells (APC), a prerequisite for efficient T cell adaptive immunity against pathogens. Binding of alpha-beta TR to pMH complex initiates TR-CD3 clustering on the cell surface and intracellular activation of LCK that phosphorylates the ITAM motifs of CD3G, CD3D, CD3E and CD247 enabling the recruitment of ZAP70. In turn ZAP70 phosphorylates LAT, which recruits numerous signaling molecules to form the LAT signalosome. The LAT signalosome propagates signal branching to three major signaling pathways, the calcium, the mitogen-activated protein kinase (MAPK) kinase and the nuclear factor NF-kappa-B (NF-kB) pathways, leading to the mobilization of transcription factors that are critical for gene expression and essential for T cell growth and differentiation. The T cell repertoire is generated in the thymus, by V-(D)-J rearrangement. This repertoire is then shaped by intrathymic selection events to generate a peripheral T cell pool of self-MH restricted, non-autoaggressive T cells. Post-thymic interaction of alpha-beta TR with the pMH complexes shapes TR structural and functional avidity. This chain is T cell receptor alpha variable 8-3, found in Homo sapiens (Human).